A 370-amino-acid chain; its full sequence is Peptide chain release factor 1 (370 aa).

Glutamine 239 is subject to N5-methylglutamine.

This sequence belongs to the prokaryotic/mitochondrial release factor family. Methylated by PrmC. Methylation increases the termination efficiency of RF1.

Its subcellular location is the cytoplasm. Its function is as follows. Peptide chain release factor 1 directs the termination of translation in response to the peptide chain termination codons UAG and UAA. This is Peptide chain release factor 1 from Bacteroides thetaiotaomicron (strain ATCC 29148 / DSM 2079 / JCM 5827 / CCUG 10774 / NCTC 10582 / VPI-5482 / E50).